A 344-amino-acid chain; its full sequence is Arginine N-succinyltransferase (344 aa).

A succinyl-CoA-binding site is contributed by Leu-125. His-229 serves as the catalytic Proton donor.

The protein belongs to the arginine N-succinyltransferase family.

It catalyses the reaction succinyl-CoA + L-arginine = N(2)-succinyl-L-arginine + CoA + H(+). It participates in amino-acid degradation; L-arginine degradation via AST pathway; L-glutamate and succinate from L-arginine: step 1/5. Its function is as follows. Catalyzes the transfer of succinyl-CoA to arginine to produce N(2)-succinylarginine. In Escherichia fergusonii (strain ATCC 35469 / DSM 13698 / CCUG 18766 / IAM 14443 / JCM 21226 / LMG 7866 / NBRC 102419 / NCTC 12128 / CDC 0568-73), this protein is Arginine N-succinyltransferase.